The following is a 225-amino-acid chain: Ribosomal RNA small subunit methyltransferase G (225 aa).

Residues Gly89, Leu94, 140-141, and Arg157 each bind S-adenosyl-L-methionine; that span reads IE.

Belongs to the methyltransferase superfamily. RNA methyltransferase RsmG family.

It localises to the cytoplasm. It catalyses the reaction guanosine(527) in 16S rRNA + S-adenosyl-L-methionine = N(7)-methylguanosine(527) in 16S rRNA + S-adenosyl-L-homocysteine. Specifically methylates the N7 position of guanine in position 527 of 16S rRNA. The protein is Ribosomal RNA small subunit methyltransferase G of Psychrobacter sp. (strain PRwf-1).